The primary structure comprises 409 residues: FADH(2)-dependent resorcinol hydroxylase, oxygenase component (409 aa).

Belongs to the HpaH/HsaA monooxygenase family. In terms of assembly, the FADH(2)-dependent resorcinol hydroxylase is composed of two subunits, GraA (the oxygenase component) and GraD (the reductase component). Both subunits are required for activity.

It catalyses the reaction resorcinol + FADH2 + O2 = benzene-1,2,4-triol + FAD + H2O + H(+). It participates in aromatic compound metabolism. Involved in the gamma-resorcylate (2,6-dihydroxybenzoate) catabolism. Oxygenase component of the resorcinol hydroxylase, which catalyzes the FADH(2)-dependent conversion of resorcinol to hydroxyquinol. This chain is FADH(2)-dependent resorcinol hydroxylase, oxygenase component, found in Rhizobium sp. (strain MTP-10005).